We begin with the raw amino-acid sequence, 190 residues long: MSKIYIDERSDAEIVCAAIKNIGIEGATAAQLTRQLNMEKREVNKALYDLQRSAMVYSSDDIPPRWFMTTEADKPDADAMADVIIDDVSREKSMREDHKSFDDVIPAKKIIDWKDANPVTIINEYCQITKRDWSFRIESVGPSNSPTFYACVDIDGRVFDKADGKSKRDAKNNAAKLAVDKLLGYVIIRF.

The region spanning 5–70 (YIDERSDAEI…DIPPRWFMTT (66 aa)) is the Z-binding domain. Positions 117–184 (NPVTIINEYC…AKLAVDKLLG (68 aa)) constitute a DRBM domain.

The protein belongs to the orthopoxvirus OPG065 family. As to quaternary structure, interacts with host G1P2/ISG15. Interacts with host EIF2AK2/PKR. Interacts with host ZBP1.

RNA-binding protein that plays a role in the inhibition of multiple cellular antiviral responses activated by double-stranded RNA (dsRNA), such as inhibition of PKR activation, necroptosis, and IFN-mediated antiviral activities. Recognizes and binds Z-RNA structures via its Z-binding domain and dsRNA via its DRBM domain: RNA-binding activity is required to escape host ZBP1-dependent necroptosis. Mechanistically, the Z-binding domain binds Z-RNAs that are produced during vaccinia virus infection, thereby competing with Z-RNA detection by host ZBP1, suppressing ZBP1-dependent necroptosis. Acts as a key inhibitor of the interferon response by blocking the phosphorylation and subsequent activation of IRF3 and IRF7 kinases that are required for interferon-alpha gene expression. Inhibits NF-kappa-B activation and the ubiquitin-like protein ISG15, which is an early antiviral protein. The binding with host ISG15 subsequently blocks host ISGylation. This is RNA-binding protein OPG065 (OPG065) from Homo sapiens (Human).